A 238-amino-acid polypeptide reads, in one-letter code: MNPEQFQTALAEKGIELSDTQLKQFHDYFEMLVEWNEKMNLTAITDEKEVYLKHFYDSISAAFYVDFTKFDTICDVGAGAGFPSLPIKICFPHLKVSIVDSLKKRMTFLDALAEKLGLTDVHFYHDRAETFGQNKAHREKYDLVTARAVARMSVLSELCMPLVKKGGSFLVMKAAQAEQELQTAEKAIKLFGGKVEEHFAFSLPVEESERNIYVITKTKETPNKYPRKPGTPNKLPIE.

S-adenosyl-L-methionine contacts are provided by residues G77, F82, A128 to E129, and R147.

This sequence belongs to the methyltransferase superfamily. RNA methyltransferase RsmG family.

It localises to the cytoplasm. Its function is as follows. Specifically methylates the N7 position of guanine in position 535 of 16S rRNA. In Listeria monocytogenes serotype 4b (strain CLIP80459), this protein is Ribosomal RNA small subunit methyltransferase G.